Consider the following 465-residue polypeptide: Cysteine--tRNA ligase (465 aa).

C28 is a Zn(2+) binding site. The 'HIGH' region signature appears at 30–40 (PTVYNYIHVGN). Residues C208, H233, and E237 each coordinate Zn(2+). Residues 265–269 (KMSKS) carry the 'KMSKS' region motif. K268 serves as a coordination point for ATP.

Belongs to the class-I aminoacyl-tRNA synthetase family. Monomer. Requires Zn(2+) as cofactor.

Its subcellular location is the cytoplasm. The enzyme catalyses tRNA(Cys) + L-cysteine + ATP = L-cysteinyl-tRNA(Cys) + AMP + diphosphate. The chain is Cysteine--tRNA ligase from Exiguobacterium sp. (strain ATCC BAA-1283 / AT1b).